The following is a 72-amino-acid chain: UPF0352 protein swp_2271 (72 aa).

This sequence belongs to the UPF0352 family.

This is UPF0352 protein swp_2271 from Shewanella piezotolerans (strain WP3 / JCM 13877).